We begin with the raw amino-acid sequence, 184 residues long: Photosystem I assembly protein Ycf4 (184 aa).

The next 2 helical transmembrane spans lie at 25 to 45 and 57 to 77; these read ACIL…SYLG and ILFV…LFIS.

This sequence belongs to the Ycf4 family.

The protein localises to the plastid. It is found in the chloroplast thylakoid membrane. Seems to be required for the assembly of the photosystem I complex. The polypeptide is Photosystem I assembly protein Ycf4 (Cycas taitungensis (Prince sago)).